Reading from the N-terminus, the 358-residue chain is Septin-12 (358 aa).

The tract at residues 1 to 25 is disordered; that stretch reads MDPLRRSPSPCLSSQPSSPSTPPCE. Residues 6 to 18 show a composition bias toward low complexity; the sequence is RSPSPCLSSQPSS. The Septin-type G domain occupies 46 to 317; it reads MGFEFNIMVV…ENYRVIRLNE (272 aa). The interaction with SEPTIN7 stretch occupies residues 46–319; that stretch reads MGFEFNIMVV…YRVIRLNESH (274 aa). A G1 motif region spans residues 56–63; it reads GQSGLGKS. Residues 56-63, Thr-89, Gly-115, 195-203, Gly-251, and Arg-266 contribute to the GTP site; these read GQSGLGKS and RADSLTMEE. The interval 112–115 is G3 motif; sequence DTPG. A G4 motif region spans residues 194-197; the sequence is ARAD. Positions 258–358 are self-association (via N-terminus) to polymerize octameric septin 12-7-6-2/4-2/4-6-7-12 filaments; sequence VNGRCVLGRK…GAHDDSDDEF (101 aa).

This sequence belongs to the TRAFAC class TrmE-Era-EngA-EngB-Septin-like GTPase superfamily. Septin GTPase family. In terms of assembly, septins polymerize into heterooligomeric protein complexes that form filaments, and can associate with cellular membranes, actin filaments and microtubules. GTPase activity is required for filament formation. Interacts with SEPTIN6 and SEPTIN11. Self-associates. Component of a septin core octameric complex consisting of SEPTIN12, SEPTIN7, SEPTIN6 and SEPTIN2 or SEPTIN4 in the order 12-7-6-2-2-6-7-12 or 12-7-6-4-4-6-7-12 and located in the sperm annulus; the octamer polymerizes into filaments via the SEPTIN12 N- and C-termini; the SEPTIN12:SEPTIN7 association is mediated by the respective GTP-binding domains. Interacts with SPAG4 and LMNB1. Associates with alpha- and beta-tubulins. Widely expressed. Expressed in lymph node.

It localises to the cytoplasm. The protein localises to the cytoskeleton. It is found in the spindle. The protein resides in the nucleus. Its subcellular location is the cell projection. It localises to the cilium. The protein localises to the flagellum. Filament-forming cytoskeletal GTPase. Involved in spermatogenesis. Involved in the morphogenesis of sperm heads and the elongation of sperm tails probably implicating the association with alpha- and beta-tubulins. Forms a filamentous structure with SEPTIN7, SEPTIN6, SEPTIN2 and probably SEPTIN4 at the sperm annulus which is required for the structural integrity and motility of the sperm tail during postmeiotic differentiation. May play a role in cytokinesis (Potential). The polypeptide is Septin-12 (Homo sapiens (Human)).